Consider the following 851-residue polypeptide: Internalin J (851 aa).

An N-terminal signal peptide occupies residues 1–25 (MKTTKIVIASLVSLTMVSNPLLTFA). LRR repeat units follow at residues 94–115 (TLTS…EKLT), 116–136 (GLTK…SQNT), 137–157 (NLTY…TPLT), 158–179 (KLTY…QNPL), 180–200 (LTYL…HNTQ), 201–221 (LTEL…TPQT), 222–243 (QLTT…QNKL), 244–263 (LNRL…NQNI), 264–284 (QLTF…TPLT), 285–306 (QLTY…TLSK), 316–325 (DLLEIDLTHN), 338–357 (KIKE…DCQA), 359–368 (GITELDLSQN), and 380–402 (ELTE…NAHI). MucBP domains are found at residues 506–568 (PIKG…SQSV), 576–638 (IVAA…AQTV), 647–709 (APEK…SQTV), and 717–779 (IEAA…AQTV). Residues 786–825 (NTNTDQPLPTKKPTNTTPTKPSNLKTTEVKKASDTLPKTG) form a disordered region. The span at 792–811 (PLPTKKPTNTTPTKPSNLKT) shows a compositional bias: low complexity. The LPXTG sorting signal signature appears at 821 to 825 (LPKTG). Thr824 bears the Pentaglycyl murein peptidoglycan amidated threonine mark. Residues 825–851 (GDSAPWKSALLGVFLSSTALVIWKKKK) constitute a propeptide, removed by sortase A.

This sequence belongs to the internalin family. Nearly full-length mature protein and an internal LRR-containing fragment interact in vitro with human intestinal mucin-2 (MUC2) but not with mucin-1. LRR fragment binding is slightly better at pH 5.5, (the pH of the intestine) than at pH 7.4.

The protein localises to the secreted. It localises to the cell wall. With respect to regulation, despite being transcribed during bacterial growth in culture the protein is only detected in infected mice. Functionally, involved in several steps of L.monocytogenes infection by both intravenous and oral infection. Probably acts as an adhesion; upon ectopic expression in L.innocula bacteria adhere better to human cell lines. The polypeptide is Internalin J (inlJ) (Listeria monocytogenes serovar 1/2a (strain ATCC BAA-679 / EGD-e)).